The following is a 372-amino-acid chain: 4-hydroxy-3-methylbut-2-en-1-yl diphosphate synthase (flavodoxin) (372 aa).

4 residues coordinate [4Fe-4S] cluster: Cys-270, Cys-273, Cys-305, and Glu-312.

This sequence belongs to the IspG family. [4Fe-4S] cluster serves as cofactor.

It carries out the reaction (2E)-4-hydroxy-3-methylbut-2-enyl diphosphate + oxidized [flavodoxin] + H2O + 2 H(+) = 2-C-methyl-D-erythritol 2,4-cyclic diphosphate + reduced [flavodoxin]. It participates in isoprenoid biosynthesis; isopentenyl diphosphate biosynthesis via DXP pathway; isopentenyl diphosphate from 1-deoxy-D-xylulose 5-phosphate: step 5/6. In terms of biological role, converts 2C-methyl-D-erythritol 2,4-cyclodiphosphate (ME-2,4cPP) into 1-hydroxy-2-methyl-2-(E)-butenyl 4-diphosphate. The sequence is that of 4-hydroxy-3-methylbut-2-en-1-yl diphosphate synthase (flavodoxin) from Cronobacter sakazakii (strain ATCC BAA-894) (Enterobacter sakazakii).